A 77-amino-acid polypeptide reads, in one-letter code: Conotoxin Vc6b (77 aa).

Residues 1–22 form the signal peptide; it reads MKLTCMMIVAVLFLTANTFVTA. A propeptide spanning residues 23–47 is cleaved from the precursor; the sequence is DDSGNGMENLFPKAGHEMENLEASN. Intrachain disulfides connect Cys52-Cys66, Cys59-Cys72, and Cys67-Cys76.

In terms of tissue distribution, expressed by the venom duct.

It localises to the secreted. This Conus victoriae (Queen Victoria cone) protein is Conotoxin Vc6b.